Consider the following 486-residue polypeptide: Malonate-semialdehyde dehydrogenase (486 aa).

Positions 154, 178, 181, 182, and 231 each coordinate NAD(+). The active-site Nucleophile is the C286. Position 386 (E386) interacts with NAD(+).

The protein belongs to the aldehyde dehydrogenase family. IolA subfamily. In terms of assembly, homotetramer.

The enzyme catalyses 3-oxopropanoate + NAD(+) + CoA + H2O = hydrogencarbonate + acetyl-CoA + NADH + H(+). It catalyses the reaction 2-methyl-3-oxopropanoate + NAD(+) + CoA + H2O = propanoyl-CoA + hydrogencarbonate + NADH + H(+). It functions in the pathway polyol metabolism; myo-inositol degradation into acetyl-CoA; acetyl-CoA from myo-inositol: step 7/7. Functionally, catalyzes the oxidation of malonate semialdehyde (MSA) and methylmalonate semialdehyde (MMSA) into acetyl-CoA and propanoyl-CoA, respectively. Is involved in a myo-inositol catabolic pathway. Bicarbonate, and not CO2, is the end-product of the enzymatic reaction. The chain is Malonate-semialdehyde dehydrogenase from Bacillus cytotoxicus (strain DSM 22905 / CIP 110041 / 391-98 / NVH 391-98).